Consider the following 352-residue polypeptide: MPRLLIAASGTGGHIYPALSFADSLSNSWEIVWLGVPNRLEVELVPEKYNLIKLKVGGLQGNIFRKLFDLCKLLFASVQVSVLLRQKKINVIFTTGGYISAPCILGAKMAGIPVLLHESNAIPGKVTRLLGRFCDHVALGIPSASEYLQRCRTSFTGTPVRTEFLFEKSLPSWVPLGEGVLIVVMGGSQGAIKMNEMVRKILPCLIEKGCRVVHLTGKNDCFYRNRDQEKSHPNLVVRDFSDEMPALLRNADLAISRSGAGAICELMVTKTPSILIPFPSSTDQHQELNAAYMARFGGAIIVNQHDPEKNILKNIVSNLLDSNSLREMKLNMNNHDYSYPEKKIFEIIHSIS.

Residues 11 to 13, Asn-120, Arg-161, Ser-188, and Gln-286 each bind UDP-N-acetyl-alpha-D-glucosamine; that span reads TGG.

This sequence belongs to the glycosyltransferase 28 family. MurG subfamily.

The protein localises to the cell inner membrane. It carries out the reaction di-trans,octa-cis-undecaprenyl diphospho-N-acetyl-alpha-D-muramoyl-L-alanyl-D-glutamyl-meso-2,6-diaminopimeloyl-D-alanyl-D-alanine + UDP-N-acetyl-alpha-D-glucosamine = di-trans,octa-cis-undecaprenyl diphospho-[N-acetyl-alpha-D-glucosaminyl-(1-&gt;4)]-N-acetyl-alpha-D-muramoyl-L-alanyl-D-glutamyl-meso-2,6-diaminopimeloyl-D-alanyl-D-alanine + UDP + H(+). It participates in cell wall biogenesis; peptidoglycan biosynthesis. Cell wall formation. Catalyzes the transfer of a GlcNAc subunit on undecaprenyl-pyrophosphoryl-MurNAc-pentapeptide (lipid intermediate I) to form undecaprenyl-pyrophosphoryl-MurNAc-(pentapeptide)GlcNAc (lipid intermediate II). The protein is UDP-N-acetylglucosamine--N-acetylmuramyl-(pentapeptide) pyrophosphoryl-undecaprenol N-acetylglucosamine transferase of Prochlorococcus marinus (strain NATL1A).